A 241-amino-acid polypeptide reads, in one-letter code: MQINISNLDVKNHLDKFIEDRLEYEFCKQDKYLYLENDNLKLHYNNKELFIDFNDSEILNRINPKTKKCSVVQAIEGRSKAKLTILDTTAGLGRDTFTLAARGHTLLTLEKDSYLYLLLKDALQRAQQINYLKEIANRITLINTDSNEYILTTDKSFDCVYVDPMFPPRKKSAKVKQGMQILHQVGFNDEVSNSNLLDNIIQTQISSKAVVKRPINAEFLSNKKPSSQLKGKTNRFDIYSL.

S-adenosyl-L-methionine contacts are provided by residues 94–95 and Asp-163; that span reads RD.

The protein belongs to the methyltransferase superfamily. RsmJ family.

Its subcellular location is the cytoplasm. The enzyme catalyses guanosine(1516) in 16S rRNA + S-adenosyl-L-methionine = N(2)-methylguanosine(1516) in 16S rRNA + S-adenosyl-L-homocysteine + H(+). Functionally, specifically methylates the guanosine in position 1516 of 16S rRNA. The polypeptide is Ribosomal RNA small subunit methyltransferase J (Francisella tularensis subsp. novicida (strain U112)).